A 478-amino-acid chain; its full sequence is Dynein regulatory complex subunit 4 (478 aa).

Residues 1-12 are compositionally biased toward basic residues; sequence MAPKKKGKKGKA. The segment at 1-29 is disordered; it reads MAPKKKGKKGKAKGTAIVDGVAPEDMTKE. The interval 1–114 is regulates microtubule-binding; that stretch reads MAPKKKGKKG…LLYEHQNNLA (114 aa). Coiled coils occupy residues 24 to 207 and 242 to 426; these read EDMT…RKTE and LNNL…ELAR. Residues 115 to 258 form a microtubule-binding region; that stretch reads EVKAEGTVVM…NSLKEQMEDM (144 aa). Positions 357–478 are interaction with SMO; the sequence is QQKTGFKNLL…GPAGLVGAPT (122 aa).

The protein belongs to the DRC4 family. As to quaternary structure, component of the nexin-dynein regulatory complex (N-DRC). Interacts with microtubules. Interacts with SMO. Interacts (via coiled-coil domains) with RAB3B (in GTP-bound form). Interacts with DRC1. Interacts with DRC7. As to expression, highly expressed in adult testes and lung. Weakly or not expressed in other tested tissues.

The protein resides in the cytoplasm. It is found in the cytoskeleton. The protein localises to the cell projection. It localises to the cilium. Its subcellular location is the flagellum. The protein resides in the cilium axoneme. It is found in the cilium basal body. The protein localises to the golgi apparatus. It localises to the flagellum axoneme. Component of the nexin-dynein regulatory complex (N-DRC), a key regulator of ciliary/flagellar motility which maintains the alignment and integrity of the distal axoneme and regulates microtubule sliding in motile axonemes. Plays an important role in the assembly of the N-DRC linker. Plays dual roles at both the primary (or non-motile) cilia to regulate hedgehog signaling and in motile cilia to coordinate cilia movement. Required for proper motile cilia functioning. Positively regulates ciliary smoothened (SMO)-dependent Hedgehog (Hh) signaling pathway by facilitating the trafficking of SMO into the cilium and the stimulation of SMO activity in a GRK2-dependent manner. May play a role in the spermatozoa motility. The chain is Dynein regulatory complex subunit 4 (Gas8) from Mus musculus (Mouse).